The chain runs to 96 residues: UPF0298 protein LCA_1075 (96 aa).

Belongs to the UPF0298 family.

It is found in the cytoplasm. The chain is UPF0298 protein LCA_1075 from Latilactobacillus sakei subsp. sakei (strain 23K) (Lactobacillus sakei subsp. sakei).